Consider the following 494-residue polypeptide: MTPPESVTLEENAATAVDPKELIKDVLEAYPEKGRKKREKHLNVYQEGKPDCGVKSNIKSLPGSMTTRGCAYAGSKGVVWGPIKDMIHISHGPVGCGYYSWSGRRNYYIGTTGIDTFGTMQFTSDFQERDIVFGGDKKLAKLITELEELFPLNRGISIQSECPIGLIGDDIEAVAKKSAKEINKAVVPVRCEGFRGVSQSLGHHIANDAVRDWIFPRTDKAKKDGTIDVDPTQYDVAIIGDYNIGGDAWSSRILLEEIGLRVVAQWSGDGTINELINTPTVKLNLVHCYRSMNYISRHMEETYGIPWLEYNFFGPTQIAKSLREIAAKFDETIQAKAEEVIAKYQAQTDEVIAKFLPRLQGKTVALMVGGLRPRHVVPAFYDLGMRLIGTGYEFGHNDDYKRTTHYIEDGTLIYDDVSAFEFEEFIKEMKPDLVASGIKEKYVFQKMALPFRQMHSWDYSGPYHGYDGFAIFARDMDMALNSPTWSLIGAPWSK.

Residues C70, C96, and C162 each coordinate [8Fe-7S] cluster. Positions 288 and 455 each coordinate [7Fe-Mo-9S-C-homocitryl] cluster.

Belongs to the NifD/NifK/NifE/NifN family. Tetramer of two alpha and two beta chains. Forms complex with the iron protein (nitrogenase component 2). The cofactor is [8Fe-7S] cluster. [7Fe-Mo-9S-C-homocitryl] cluster serves as cofactor.

It carries out the reaction N2 + 8 reduced [2Fe-2S]-[ferredoxin] + 16 ATP + 16 H2O = H2 + 8 oxidized [2Fe-2S]-[ferredoxin] + 2 NH4(+) + 16 ADP + 16 phosphate + 6 H(+). This molybdenum-iron protein is part of the nitrogenase complex that catalyzes the key enzymatic reactions in nitrogen fixation. This chain is Nitrogenase molybdenum-iron protein alpha chain (nifD), found in Leptolyngbya boryana (Plectonema boryanum).